The primary structure comprises 80 residues: Exodeoxyribonuclease 7 small subunit (80 aa).

It belongs to the XseB family. In terms of assembly, heterooligomer composed of large and small subunits.

The protein resides in the cytoplasm. It catalyses the reaction Exonucleolytic cleavage in either 5'- to 3'- or 3'- to 5'-direction to yield nucleoside 5'-phosphates.. Functionally, bidirectionally degrades single-stranded DNA into large acid-insoluble oligonucleotides, which are then degraded further into small acid-soluble oligonucleotides. This Oleidesulfovibrio alaskensis (strain ATCC BAA-1058 / DSM 17464 / G20) (Desulfovibrio alaskensis) protein is Exodeoxyribonuclease 7 small subunit.